The sequence spans 366 residues: MMFVHIADNHLGYRQYNLDDREKDIYDSFKLCIKKILEIKPDVVLHSGDLFNDLRPPVKALRIAMQAFKKLHENNIKVYIVAGNHEMPRRLGEESPLALLKDYVKILDGKDVINVNGEEIFICGTYYHKKSKREEMLDKLKNFESEAKNYKKKILMLHQGINPYIPLDYELEHFDLPKFSYYALGHIHKRILERFNDGILAYSGSTEIIYRNEYEDYKKEGKGFYLVDFSGNDLDISDIEKIDIECREFVEVNIKDKKSFNEAVNKIERCKNKPVVFGKIKREFKPWFDTLKDKILINKAIIVDDEFIDMPDNVDIESLNIKELLVDYANRQGIDGDLVLSLYKALLNNENWKELLDEYYNTKFRG.

Mn(2+)-binding residues include Asp8, His10, Asp49, and Asn84. His85 serves as the catalytic Proton donor. 3 residues coordinate Mn(2+): His158, His186, and His188.

It belongs to the MRE11/RAD32 family. As to quaternary structure, homodimer. Forms a heterotetramer composed of two Mre11 subunits and two Rad50 subunits. Mn(2+) serves as cofactor.

Nuclease activity is regulated by Rad50. Its function is as follows. Part of the Rad50/Mre11 complex, which is involved in the early steps of DNA double-strand break (DSB) repair. The complex may facilitate opening of the processed DNA ends to aid in the recruitment of HerA and NurA. Mre11 binds to DSB ends and has both double-stranded 3'-5' exonuclease activity and single-stranded endonuclease activity. This chain is DNA double-strand break repair protein Mre11, found in Methanocaldococcus jannaschii (strain ATCC 43067 / DSM 2661 / JAL-1 / JCM 10045 / NBRC 100440) (Methanococcus jannaschii).